The chain runs to 421 residues: Histidine--tRNA ligase (421 aa).

It belongs to the class-II aminoacyl-tRNA synthetase family. In terms of assembly, homodimer.

It localises to the cytoplasm. The enzyme catalyses tRNA(His) + L-histidine + ATP = L-histidyl-tRNA(His) + AMP + diphosphate + H(+). The sequence is that of Histidine--tRNA ligase from Fervidobacterium nodosum (strain ATCC 35602 / DSM 5306 / Rt17-B1).